The chain runs to 244 residues: DNA repair protein RecO (244 aa).

It belongs to the RecO family.

Functionally, involved in DNA repair and RecF pathway recombination. This Jannaschia sp. (strain CCS1) protein is DNA repair protein RecO.